The following is a 620-amino-acid chain: Ran-binding protein 10 (620 aa).

Residues 1–38 form a disordered region; it reads MAAATADPGAGNPQAGDSSGGDSGGGLPSPGEQELSRR. The residue at position 2 (A2) is an N-acetylalanine. Residues 18–28 are compositionally biased toward gly residues; sequence SSGGDSGGGLP. The B30.2/SPRY domain occupies 35 to 222; sequence LSRRLQRLYP…VDANFGQQPF (188 aa). In terms of domain architecture, LisH spans 253-285; that stretch reads WQAVLQNMVSSYLVHHGYCSTATAFARMTETPI. In terms of domain architecture, CTLH spans 291–348; that stretch reads SIKNRQKIQKLVLEGRVGEAIETTQRFYPGLLEHNPNLLFMLKCRQFVEMVNGTDSEV. Residues 347–398 show a composition bias toward polar residues; that stretch reads EVRSLSSRSPKSQDSYPGSPSLSPRHGPSSSHIHNTGADSPSCSNGVASTKN. The interval 347-460 is disordered; the sequence is EVRSLSSRSP…SDSEMEMEAE (114 aa). S361 is modified (phosphoserine). Phosphotyrosine is present on Y362. Phosphoserine is present on residues S365, S367, S369, and S422. Residues 409–436 show a composition bias toward low complexity; sequence SSSSSSSSSSSSSSPSSVNYSESNSTDS. Positions 437–450 are enriched in polar residues; that stretch reads TKSQPHSSTSNQET. Residues S451 and S453 each carry the phosphoserine modification.

Belongs to the RANBP9/10 family. As to quaternary structure, may form homodimers. Identified in the CTLH complex that contains GID4, RANBP9 and/or RANBP10, MKLN1, MAEA, RMND5A (or alternatively its paralog RMND5B), GID8, ARMC8, WDR26 and YPEL5. Within this complex, MAEA, RMND5A (or alternatively its paralog RMND5B), GID8, WDR26, and RANBP9 and/or RANBP10 form the catalytic core, while GID4, MKLN1, ARMC8 and YPEL5 have ancillary roles. Interacts with RAN and RANBP9. Interacts with the HGF receptor MET. Interacts with AR. Interacts with TUBB1. Interacts with YPEL5. May interact with TUBB5. Interacts with DDX4. In terms of tissue distribution, expressed at highest levels in spleen and liver. Expressed in megakaryocytes and platelets (at protein level).

The protein localises to the cytoplasm. It is found in the nucleus. Its function is as follows. May act as an adapter protein to couple membrane receptors to intracellular signaling pathways. Core component of the CTLH E3 ubiquitin-protein ligase complex that selectively accepts ubiquitin from UBE2H and mediates ubiquitination and subsequent proteasomal degradation of the transcription factor HBP1. Enhances dihydrotestosterone-induced transactivation activity of AR, as well as dexamethasone-induced transactivation activity of NR3C1, but does not affect estrogen-induced transactivation. Acts as a guanine nucleotide exchange factor (GEF) for RAN GTPase. May play an essential role in hemostasis and in maintaining microtubule dynamics with respect to both platelet shape and function. The protein is Ran-binding protein 10 (Ranbp10) of Mus musculus (Mouse).